The sequence spans 279 residues: Ultraviolet N-glycosylase/AP lyase (279 aa).

Residues 123-142 form the HhH domain; sequence LEDLVALPGVGRKTAFVVLG. [4Fe-4S] cluster is bound by residues Cys203, Cys210, Cys213, and Cys219. Residues 256–279 form a disordered region; the sequence is TAGAAGPRPRAGGXAPGLPAQPFR.

This sequence belongs to the Nth/MutY family. The cofactor is [4Fe-4S] cluster.

In terms of biological role, DNA repair enzyme that has both DNA N-glycosylase activity and AP-lyase activity. Initiates repair at cis-syn pyrimidine dimers. Proceeds via an imino enzyme:DNA intermediate. In Micrococcus luteus (strain ATCC 4698 / DSM 20030 / JCM 1464 / CCM 169 / CCUG 5858 / IAM 1056 / NBRC 3333 / NCIMB 9278 / NCTC 2665 / VKM Ac-2230) (Micrococcus lysodeikticus), this protein is Ultraviolet N-glycosylase/AP lyase (pdg).